A 351-amino-acid chain; its full sequence is Probable dual-specificity RNA methyltransferase RlmN (351 aa).

Glutamate 97 (proton acceptor) is an active-site residue. The Radical SAM core domain maps to 103 to 337; the sequence is YDYGNTVCIS…VTVRKERGVD (235 aa). An intrachain disulfide couples cysteine 110 to cysteine 342. The [4Fe-4S] cluster site is built by cysteine 117, cysteine 121, and cysteine 124. S-adenosyl-L-methionine contacts are provided by residues 166-167, serine 198, 221-223, and asparagine 299; these read GE and SLH. Residue cysteine 342 is the S-methylcysteine intermediate of the active site.

This sequence belongs to the radical SAM superfamily. RlmN family. [4Fe-4S] cluster is required as a cofactor.

The protein resides in the cytoplasm. It carries out the reaction adenosine(2503) in 23S rRNA + 2 reduced [2Fe-2S]-[ferredoxin] + 2 S-adenosyl-L-methionine = 2-methyladenosine(2503) in 23S rRNA + 5'-deoxyadenosine + L-methionine + 2 oxidized [2Fe-2S]-[ferredoxin] + S-adenosyl-L-homocysteine. The enzyme catalyses adenosine(37) in tRNA + 2 reduced [2Fe-2S]-[ferredoxin] + 2 S-adenosyl-L-methionine = 2-methyladenosine(37) in tRNA + 5'-deoxyadenosine + L-methionine + 2 oxidized [2Fe-2S]-[ferredoxin] + S-adenosyl-L-homocysteine. Functionally, specifically methylates position 2 of adenine 2503 in 23S rRNA and position 2 of adenine 37 in tRNAs. This Natranaerobius thermophilus (strain ATCC BAA-1301 / DSM 18059 / JW/NM-WN-LF) protein is Probable dual-specificity RNA methyltransferase RlmN.